Reading from the N-terminus, the 226-residue chain is ATP synthase F(0) complex subunit a (226 aa).

A run of 7 helical transmembrane segments spans residues 11–31 (SPELLMIPTALLSMLVPVLLI), 37–54 (LLGNRMTTAIAWLLMTIM), 72–92 (LTSLLLMILLSNLLGLLPYTF), 98–118 (LSMNMAMAIPLWMATIITGMT), 138–158 (IPFMIIIETISLLMRPLALGV), 178–198 (TLNFITSHITLSIMTYLLLFL), and 199–219 (LCILELAVACIQAYVFVLLII).

It belongs to the ATPase A chain family. As to quaternary structure, component of the ATP synthase complex composed at least of ATP5F1A/subunit alpha, ATP5F1B/subunit beta, ATP5MC1/subunit c (homooctomer), MT-ATP6/subunit a, MT-ATP8/subunit 8, ATP5ME/subunit e, ATP5MF/subunit f, ATP5MG/subunit g, ATP5MK/subunit k, ATP5MJ/subunit j, ATP5F1C/subunit gamma, ATP5F1D/subunit delta, ATP5F1E/subunit epsilon, ATP5PF/subunit F6, ATP5PB/subunit b, ATP5PD/subunit d, ATP5PO/subunit OSCP. ATP synthase complex consists of a soluble F(1) head domain (subunits alpha(3) and beta(3)) - the catalytic core - and a membrane F(0) domain - the membrane proton channel (subunits c, a, 8, e, f, g, k and j). These two domains are linked by a central stalk (subunits gamma, delta, and epsilon) rotating inside the F1 region and a stationary peripheral stalk (subunits F6, b, d, and OSCP). Interacts with DNAJC30; interaction is direct.

The protein resides in the mitochondrion inner membrane. The enzyme catalyses H(+)(in) = H(+)(out). Its function is as follows. Subunit a, of the mitochondrial membrane ATP synthase complex (F(1)F(0) ATP synthase or Complex V) that produces ATP from ADP in the presence of a proton gradient across the membrane which is generated by electron transport complexes of the respiratory chain. ATP synthase complex consist of a soluble F(1) head domain - the catalytic core - and a membrane F(1) domain - the membrane proton channel. These two domains are linked by a central stalk rotating inside the F(1) region and a stationary peripheral stalk. During catalysis, ATP synthesis in the catalytic domain of F(1) is coupled via a rotary mechanism of the central stalk subunits to proton translocation. With the subunit c (ATP5MC1), forms the proton-conducting channel in the F(0) domain, that contains two crucial half-channels (inlet and outlet) that facilitate proton movement from the mitochondrial intermembrane space (IMS) into the matrix. Protons are taken up via the inlet half-channel and released through the outlet half-channel, following a Grotthuss mechanism. The protein is ATP synthase F(0) complex subunit a of Lycodon semicarinatus (Ryukyu odd-tooth snake).